The sequence spans 452 residues: MNICMRNGYEQFSLTSPGTSDLEIGGSFWKDEPDTKYLCLDSPVEQRQHQPPMAVCAGCRLEISDRYFLRVNPNLEFHAQCLKCVQCSRPLDENQTAFVKNGQTYCRDDYRRLFTTRCSRCHGDFDKTDLVMRAGPQNVFHLNCFACVACEKRLQTGEEFQIKNNSLYCRSDCRGLDNPDTSASVPDYSKLNNNNNNDNNNSSSNFDEDEWDEERSTLTSLDNNTSSPLGSPKSDGVRTPLFGHHNSGSGGSTSSCGKKKKDKQATRVRTVLNENQLKILRDCYSINSRPDATLKERLVEMTGLSARVIRVWFQNKRCKDKKRQIQITENRLNSEREEVLNRVRVNGIGPLMVQPATPHIDNTLGGPIDIQHFAQWNGTPPPPPPQYGNPMMFNSPSTFDVSVILAPVAPNVTSPSEALGPLGASVFPHFSPQHAPFTATSHDISSPAPCGE.

LIM zinc-binding domains lie at 54–116 (AVCA…LFTT) and 117–179 (RCSR…LDNP). The disordered stretch occupies residues 184 to 268 (SVPDYSKLNN…KKKDKQATRV (85 aa)). 2 stretches are compositionally biased toward low complexity: residues 192-205 (NNNNNNDNNNSSSN) and 217-227 (TLTSLDNNTSS). Residues 265 to 324 (ATRVRTVLNENQLKILRDCYSINSRPDATLKERLVEMTGLSARVIRVWFQNKRCKDKKRQ) constitute a DNA-binding region (homeobox). The LIM interaction domain (LID) stretch occupies residues 347–376 (GIGPLMVQPATPHIDNTLGGPIDIQHFAQW).

In terms of assembly, interacts (via LID domain) with ceh-14 (via LIM zinc-binding domains 1 and 2). As to expression, expressed in gonadal sheath cells, URA motoneurons, and 10 additional cells near the isthmus and terminal bulb of the pharynx. Expressed in the ALA and BDU cells.

It is found in the nucleus. Probable DNA-binding transcriptional activator. In Caenorhabditis elegans, this protein is LIM/homeobox protein lim-7.